Here is a 300-residue protein sequence, read N- to C-terminus: uncharacterized protein (300 aa).

S49 functions as the Charge relay system in the catalytic mechanism. Residue Y137 is the Proton donor of the active site. Residue K165 is the Schiff-base intermediate with substrate of the active site.

It belongs to the DapA family. In terms of assembly, homotetramer.

The protein resides in the cytoplasm. Its function is as follows. Upon expression in E.coli complements a dapA deletion mutation, but this may not be its physiological function. This is an uncharacterized protein from Rhizobium meliloti (Ensifer meliloti).